Consider the following 257-residue polypeptide: Imidazole glycerol phosphate synthase subunit HisF (257 aa).

Active-site residues include Asp-11 and Asp-130.

This sequence belongs to the HisA/HisF family. As to quaternary structure, heterodimer of HisH and HisF.

The protein localises to the cytoplasm. It carries out the reaction 5-[(5-phospho-1-deoxy-D-ribulos-1-ylimino)methylamino]-1-(5-phospho-beta-D-ribosyl)imidazole-4-carboxamide + L-glutamine = D-erythro-1-(imidazol-4-yl)glycerol 3-phosphate + 5-amino-1-(5-phospho-beta-D-ribosyl)imidazole-4-carboxamide + L-glutamate + H(+). It functions in the pathway amino-acid biosynthesis; L-histidine biosynthesis; L-histidine from 5-phospho-alpha-D-ribose 1-diphosphate: step 5/9. In terms of biological role, IGPS catalyzes the conversion of PRFAR and glutamine to IGP, AICAR and glutamate. The HisF subunit catalyzes the cyclization activity that produces IGP and AICAR from PRFAR using the ammonia provided by the HisH subunit. The chain is Imidazole glycerol phosphate synthase subunit HisF from Aliivibrio fischeri (strain MJ11) (Vibrio fischeri).